Consider the following 263-residue polypeptide: Probable adenylate kinase 7, mitochondrial (263 aa).

The N-terminal 30 residues, 1 to 30 (MAWLSRVRGVSPVTRLAAIRRSFGSAAALE), are a transit peptide targeting the mitochondrion. ATP is bound at residue 72–77 (GAWRHV). An NMP region spans residues 92 to 121 (SMGSLVRQELNPRSSLYKEIASAVNERKLV). Residues arginine 98, 119–121 (KLV), 149–152 (GIPR), glutamine 156, and arginine 206 each bind AMP. Glycine 234 is a binding site for ATP.

This sequence belongs to the adenylate kinase family. As to quaternary structure, monomer.

The protein resides in the mitochondrion. The catalysed reaction is AMP + ATP = 2 ADP. In terms of biological role, catalyzes the reversible transfer of the terminal phosphate group between ATP and AMP. Plays an important role in cellular energy homeostasis and in adenine nucleotide metabolism. The polypeptide is Probable adenylate kinase 7, mitochondrial (Arabidopsis thaliana (Mouse-ear cress)).